Here is a 197-residue protein sequence, read N- to C-terminus: FMN-dependent NADH:quinone oxidoreductase (197 aa).

Residues Ser10 and 17-19 (SFS) each bind FMN.

This sequence belongs to the azoreductase type 1 family. As to quaternary structure, homodimer. FMN is required as a cofactor.

It carries out the reaction 2 a quinone + NADH + H(+) = 2 a 1,4-benzosemiquinone + NAD(+). The enzyme catalyses N,N-dimethyl-1,4-phenylenediamine + anthranilate + 2 NAD(+) = 2-(4-dimethylaminophenyl)diazenylbenzoate + 2 NADH + 2 H(+). Quinone reductase that provides resistance to thiol-specific stress caused by electrophilic quinones. Its function is as follows. Also exhibits azoreductase activity. Catalyzes the reductive cleavage of the azo bond in aromatic azo compounds to the corresponding amines. The protein is FMN-dependent NADH:quinone oxidoreductase of Mycoplasmoides gallisepticum (strain R(low / passage 15 / clone 2)) (Mycoplasma gallisepticum).